A 251-amino-acid chain; its full sequence is Imidazole glycerol phosphate synthase subunit HisF (251 aa).

Active-site residues include D11 and D130.

The protein belongs to the HisA/HisF family. As to quaternary structure, heterodimer of HisH and HisF.

It localises to the cytoplasm. The catalysed reaction is 5-[(5-phospho-1-deoxy-D-ribulos-1-ylimino)methylamino]-1-(5-phospho-beta-D-ribosyl)imidazole-4-carboxamide + L-glutamine = D-erythro-1-(imidazol-4-yl)glycerol 3-phosphate + 5-amino-1-(5-phospho-beta-D-ribosyl)imidazole-4-carboxamide + L-glutamate + H(+). It participates in amino-acid biosynthesis; L-histidine biosynthesis; L-histidine from 5-phospho-alpha-D-ribose 1-diphosphate: step 5/9. IGPS catalyzes the conversion of PRFAR and glutamine to IGP, AICAR and glutamate. The HisF subunit catalyzes the cyclization activity that produces IGP and AICAR from PRFAR using the ammonia provided by the HisH subunit. This Pelagibacter ubique (strain HTCC1062) protein is Imidazole glycerol phosphate synthase subunit HisF.